We begin with the raw amino-acid sequence, 26 residues long: Nicotinic acetylcholine receptor-binding protein Mnn-1A (26 aa).

Residues Cys3 and Cys22 are joined by a disulfide bond.

It belongs to the three-finger toxin family. Short-chain subfamily. In terms of tissue distribution, expressed by the venom gland.

Its subcellular location is the secreted. Its function is as follows. Binds and may inhibit nicotinic acetylcholine receptors (nAChR). The sequence is that of Nicotinic acetylcholine receptor-binding protein Mnn-1A from Micrurus nigrocinctus (Central American coral snake).